A 320-amino-acid polypeptide reads, in one-letter code: Holliday junction branch migration complex subunit RuvB (320 aa).

The tract at residues 1 to 172 (MTANVCLDES…FGIISRLEYY (172 aa)) is large ATPase domain (RuvB-L). ATP-binding positions include Arg12, Gly53, Lys56, Thr57, Thr58, 119–121 (EDF), Arg162, Tyr172, and Arg209. Thr57 is a binding site for Mg(2+). Residues 173-243 (TPADLARIVA…LASEALGRME (71 aa)) are small ATPAse domain (RuvB-S). Residues 246–320 (ESGLDQMDRK…KAYRHLNLLG (75 aa)) are head domain (RuvB-H). Residues Arg301 and Arg306 each contribute to the DNA site.

Belongs to the RuvB family. As to quaternary structure, homohexamer. Forms an RuvA(8)-RuvB(12)-Holliday junction (HJ) complex. HJ DNA is sandwiched between 2 RuvA tetramers; dsDNA enters through RuvA and exits via RuvB. An RuvB hexamer assembles on each DNA strand where it exits the tetramer. Each RuvB hexamer is contacted by two RuvA subunits (via domain III) on 2 adjacent RuvB subunits; this complex drives branch migration. In the full resolvosome a probable DNA-RuvA(4)-RuvB(12)-RuvC(2) complex forms which resolves the HJ.

It localises to the cytoplasm. It catalyses the reaction ATP + H2O = ADP + phosphate + H(+). Its function is as follows. The RuvA-RuvB-RuvC complex processes Holliday junction (HJ) DNA during genetic recombination and DNA repair, while the RuvA-RuvB complex plays an important role in the rescue of blocked DNA replication forks via replication fork reversal (RFR). RuvA specifically binds to HJ cruciform DNA, conferring on it an open structure. The RuvB hexamer acts as an ATP-dependent pump, pulling dsDNA into and through the RuvAB complex. RuvB forms 2 homohexamers on either side of HJ DNA bound by 1 or 2 RuvA tetramers; 4 subunits per hexamer contact DNA at a time. Coordinated motions by a converter formed by DNA-disengaged RuvB subunits stimulates ATP hydrolysis and nucleotide exchange. Immobilization of the converter enables RuvB to convert the ATP-contained energy into a lever motion, pulling 2 nucleotides of DNA out of the RuvA tetramer per ATP hydrolyzed, thus driving DNA branch migration. The RuvB motors rotate together with the DNA substrate, which together with the progressing nucleotide cycle form the mechanistic basis for DNA recombination by continuous HJ branch migration. Branch migration allows RuvC to scan DNA until it finds its consensus sequence, where it cleaves and resolves cruciform DNA. The sequence is that of Holliday junction branch migration complex subunit RuvB from Nitratidesulfovibrio vulgaris (strain ATCC 29579 / DSM 644 / CCUG 34227 / NCIMB 8303 / VKM B-1760 / Hildenborough) (Desulfovibrio vulgaris).